The following is a 727-amino-acid chain: Phosphoribosylformylglycinamidine synthase subunit PurL (727 aa).

Histidine 47 is an active-site residue. Tyrosine 50 and lysine 82 together coordinate ATP. Residue glutamate 84 coordinates Mg(2+). Residues 85-88 and arginine 107 contribute to the substrate site; that span reads SHNH. Catalysis depends on histidine 86, which acts as the Proton acceptor. Aspartate 108 is a Mg(2+) binding site. Residue glutamine 229 participates in substrate binding. Aspartate 257 is a binding site for Mg(2+). 301-303 serves as a coordination point for substrate; the sequence is ESQ. ATP contacts are provided by aspartate 486 and glycine 523. Asparagine 524 contacts Mg(2+). Substrate is bound at residue serine 526.

The protein belongs to the FGAMS family. As to quaternary structure, monomer. Part of the FGAM synthase complex composed of 1 PurL, 1 PurQ and 2 PurS subunits.

The protein localises to the cytoplasm. It carries out the reaction N(2)-formyl-N(1)-(5-phospho-beta-D-ribosyl)glycinamide + L-glutamine + ATP + H2O = 2-formamido-N(1)-(5-O-phospho-beta-D-ribosyl)acetamidine + L-glutamate + ADP + phosphate + H(+). Its pathway is purine metabolism; IMP biosynthesis via de novo pathway; 5-amino-1-(5-phospho-D-ribosyl)imidazole from N(2)-formyl-N(1)-(5-phospho-D-ribosyl)glycinamide: step 1/2. Its function is as follows. Part of the phosphoribosylformylglycinamidine synthase complex involved in the purines biosynthetic pathway. Catalyzes the ATP-dependent conversion of formylglycinamide ribonucleotide (FGAR) and glutamine to yield formylglycinamidine ribonucleotide (FGAM) and glutamate. The FGAM synthase complex is composed of three subunits. PurQ produces an ammonia molecule by converting glutamine to glutamate. PurL transfers the ammonia molecule to FGAR to form FGAM in an ATP-dependent manner. PurS interacts with PurQ and PurL and is thought to assist in the transfer of the ammonia molecule from PurQ to PurL. This is Phosphoribosylformylglycinamidine synthase subunit PurL from Petrotoga mobilis (strain DSM 10674 / SJ95).